The primary structure comprises 144 residues: Cell division protein SepF (144 aa).

This sequence belongs to the SepF family. Homodimer. Interacts with FtsZ.

It is found in the cytoplasm. Its function is as follows. Cell division protein that is part of the divisome complex and is recruited early to the Z-ring. Probably stimulates Z-ring formation, perhaps through the cross-linking of FtsZ protofilaments. Its function overlaps with FtsA. This chain is Cell division protein SepF, found in Geobacillus sp. (strain WCH70).